A 422-amino-acid polypeptide reads, in one-letter code: Histidine--tRNA ligase (422 aa).

Belongs to the class-II aminoacyl-tRNA synthetase family. As to quaternary structure, homodimer.

It localises to the cytoplasm. The catalysed reaction is tRNA(His) + L-histidine + ATP = L-histidyl-tRNA(His) + AMP + diphosphate + H(+). The sequence is that of Histidine--tRNA ligase from Syntrophomonas wolfei subsp. wolfei (strain DSM 2245B / Goettingen).